The sequence spans 797 residues: Ubiquitin carboxyl-terminal hydrolase 14 (797 aa).

A UBP-type; degenerate zinc finger spans residues 156–266 (LISEHALTLQ…EHLAHFGIDF (111 aa)). Residues C180, C183, C200, and H213 each coordinate Zn(2+). The 489-residue stretch at 308 to 796 (TGLVNLGNSC…MGYVYFFQRL (489 aa)) folds into the USP domain. C317 (nucleophile) is an active-site residue. UBA domains follow at residues 613–654 (VANE…LLSH) and 670–710 (DIDQ…VFNN). The active-site Proton acceptor is H758.

Belongs to the peptidase C19 family. Constitutively and ubiquitously expressed (at protein level).

It catalyses the reaction Thiol-dependent hydrolysis of ester, thioester, amide, peptide and isopeptide bonds formed by the C-terminal Gly of ubiquitin (a 76-residue protein attached to proteins as an intracellular targeting signal).. Recognizes and hydrolyzes the peptide bond at the C-terminal Gly of ubiquitin. Involved in the processing of poly-ubiquitin precursors as well as that of ubiquitinated proteins. Involved in seed and embryo development. The sequence is that of Ubiquitin carboxyl-terminal hydrolase 14 (UBP14) from Arabidopsis thaliana (Mouse-ear cress).